The sequence spans 114 residues: Nucleoid-associated protein slr1847 (114 aa).

Belongs to the YbaB/EbfC family. Homodimer.

The protein resides in the cytoplasm. It localises to the nucleoid. Binds to DNA and alters its conformation. May be involved in regulation of gene expression, nucleoid organization and DNA protection. In Synechocystis sp. (strain ATCC 27184 / PCC 6803 / Kazusa), this protein is Nucleoid-associated protein slr1847.